The following is a 239-amino-acid chain: Norbelladine 4'-O-methyltransferase 5 (239 aa).

Residues valine 55, glutamate 77, 79 to 80, serine 85, aspartate 103, and alanine 132 contribute to the S-adenosyl-L-methionine site; that span reads GV. An a divalent metal cation-binding site is contributed by aspartate 155. Aspartate 157 contacts S-adenosyl-L-methionine. A divalent metal cation-binding residues include aspartate 181 and asparagine 182.

Belongs to the class I-like SAM-binding methyltransferase superfamily. Cation-dependent O-methyltransferase family. Requires Mg(2+) as cofactor.

The enzyme catalyses norbelladine + S-adenosyl-L-methionine = 4'-O-methylnorbelladine + S-adenosyl-L-homocysteine + H(+). The protein operates within alkaloid biosynthesis. 4'-O-methyltransferase converting norbelladine to 4'-O-methylnorbelladine. 4'-O-methylnorbelladine is a precursor to all Amaryllidaceae alkaloids such as galanthamine, lycorine and haemanthamine, and including haemanthamine- and crinamine-type alkaloids, promising anticancer agents. The polypeptide is Norbelladine 4'-O-methyltransferase 5 (Narcissus aff. pseudonarcissus MK-2014 (Daffodil)).